Consider the following 349-residue polypeptide: Phenylalanine--tRNA ligase alpha subunit (349 aa).

Position 264 (glutamate 264) interacts with Mg(2+).

The protein belongs to the class-II aminoacyl-tRNA synthetase family. Phe-tRNA synthetase alpha subunit type 1 subfamily. Tetramer of two alpha and two beta subunits. Mg(2+) is required as a cofactor.

It localises to the cytoplasm. The enzyme catalyses tRNA(Phe) + L-phenylalanine + ATP = L-phenylalanyl-tRNA(Phe) + AMP + diphosphate + H(+). The polypeptide is Phenylalanine--tRNA ligase alpha subunit (Myxococcus xanthus (strain DK1622)).